A 119-amino-acid chain; its full sequence is Hydrogenase maturation factor HypA (119 aa).

His-2 contacts Ni(2+). Residues Cys-73, Cys-76, Cys-89, and Cys-92 each contribute to the Zn(2+) site.

The protein belongs to the HypA/HybF family.

Functionally, involved in the maturation of [NiFe] hydrogenases. Required for nickel insertion into the metal center of the hydrogenase. This is Hydrogenase maturation factor HypA from Dehalococcoides mccartyi (strain ATCC BAA-2100 / JCM 16839 / KCTC 5957 / BAV1).